The sequence spans 485 residues: Otoconin-90 (485 aa).

The first 17 residues, 1-17, serve as a signal peptide directing secretion; sequence MIMLLMVGMLMAPCVGA. N-linked (GlcNAc...) asparagine glycosylation occurs at asparagine 37. The segment at 75–189 is phospholipase A2-like 1; the sequence is LLQFVNSMRC…SLNFLDASFC (115 aa). 7 cysteine pairs are disulfide-bonded: cysteine 84-cysteine 144, cysteine 98-cysteine 189, cysteine 100-cysteine 116, cysteine 115-cysteine 171, cysteine 122-cysteine 164, cysteine 131-cysteine 157, and cysteine 151-cysteine 162. 2 N-linked (GlcNAc...) asparagine glycosylation sites follow: asparagine 178 and asparagine 288. Phospholipase A2-like stretches follow at residues 315–371 and 383–435; these read MLQL…QVGC and CEDH…PVSC. N-linked (GlcNAc...) asparagine glycosylation occurs at asparagine 417. The disordered stretch occupies residues 444–485; it reads LASSVDSSSEENSEEAPPQMERLRRFLEKPPGPLGARPLGGK.

It belongs to the phospholipase A2 family. In terms of assembly, interacts with OTOL1. In terms of tissue distribution, in the embryo, highly expressed in the developing otocyst with weak expression in the brain. Also expressed in nonsensory epithelia of both the vestibular and cochlear portions of the developing inner ear. Not expressed in adult or embryonic macular sensory epithelia.

The protein resides in the secreted. Its function is as follows. Major protein of the otoconia, a calcium carbonate structure in the saccule and utricle of the ear. Together with OTOL1, acts as a scaffold for otoconia biomineralization: sequesters calcium and forms interconnecting fibrils between otoconia that are incorporated into the calcium crystal structure. Together with OTOL1, modulates calcite crystal morphology and growth kinetics. It is unlikely that this protein has phospholipase A2 activity. The polypeptide is Otoconin-90 (Mus musculus (Mouse)).